We begin with the raw amino-acid sequence, 512 residues long: 3-ketoacyl-CoA synthase 9 (512 aa).

2 helical membrane-spanning segments follow: residues 44-64 (LITH…VTEI) and 83-103 (LVAF…YIMS). Residues 100–389 (YIMSRPRSVY…FFMTLVTKKL (290 aa)) form the FAE domain. Residues Cys-244, His-323, His-407, His-411, His-440, and Asn-444 contribute to the active site.

This sequence belongs to the thiolase-like superfamily. Chalcone/stilbene synthases family. Expressed in seedlings, stems, leaves, flowers and siliques. Expressed in roots, leaves, and stems, including epidermis, silique walls, sepals, the upper portion of the styles, and seed coats, but not in developing embryos.

The protein localises to the endoplasmic reticulum membrane. It catalyses the reaction a very-long-chain acyl-CoA + malonyl-CoA + H(+) = a very-long-chain 3-oxoacyl-CoA + CO2 + CoA. The protein operates within lipid metabolism; fatty acid biosynthesis. Functionally, involved in the elongation of C22 to C24 fatty acids, which are precursors for the biosynthesis of cuticular waxes, aliphatic suberins, and membrane lipids, including sphingolipids and phospholipids. This chain is 3-ketoacyl-CoA synthase 9, found in Arabidopsis thaliana (Mouse-ear cress).